The chain runs to 292 residues: Ribosomal protein L11 methyltransferase (292 aa).

Thr136, Gly159, Asp181, and Asn228 together coordinate S-adenosyl-L-methionine.

Belongs to the methyltransferase superfamily. PrmA family.

The protein localises to the cytoplasm. It catalyses the reaction L-lysyl-[protein] + 3 S-adenosyl-L-methionine = N(6),N(6),N(6)-trimethyl-L-lysyl-[protein] + 3 S-adenosyl-L-homocysteine + 3 H(+). Methylates ribosomal protein L11. The chain is Ribosomal protein L11 methyltransferase from Agrobacterium fabrum (strain C58 / ATCC 33970) (Agrobacterium tumefaciens (strain C58)).